Here is a 348-residue protein sequence, read N- to C-terminus: ECA polysaccharide chain length modulation protein (348 aa).

2 consecutive transmembrane segments (helical) span residues 31-51 (FWII…TFFA) and 323-343 (AFLM…VALT).

The protein belongs to the WzzB/Cld/Rol family. In terms of assembly, probably part of a complex composed of WzxE, WzyE and WzzE.

It is found in the cell inner membrane. It functions in the pathway bacterial outer membrane biogenesis; enterobacterial common antigen biosynthesis. Functionally, modulates the polysaccharide chain length of enterobacterial common antigen (ECA). The protein is ECA polysaccharide chain length modulation protein of Salmonella typhimurium (strain LT2 / SGSC1412 / ATCC 700720).